Reading from the N-terminus, the 700-residue chain is Methionine--tRNA ligase (700 aa).

The 'HIGH' region signature appears at 13–23; sequence PYANGDIHLGH. Zn(2+)-binding residues include C144, C147, C157, and C160. Positions 341–345 match the 'KMSKS' region motif; sequence KMSKS. K344 is a binding site for ATP. The disordered stretch occupies residues 562-587; sequence QVGAPTASQDDKAAAKNTSPAAMPSS. The span at 577–587 shows a compositional bias: polar residues; sequence KNTSPAAMPSS. The region spanning 598–700 is the tRNA-binding domain; that stretch reads DFAKVEMKVA…DEAVIGDSLA (103 aa).

The protein belongs to the class-I aminoacyl-tRNA synthetase family. MetG type 1 subfamily. In terms of assembly, homodimer. It depends on Zn(2+) as a cofactor.

It is found in the cytoplasm. It carries out the reaction tRNA(Met) + L-methionine + ATP = L-methionyl-tRNA(Met) + AMP + diphosphate. Its function is as follows. Is required not only for elongation of protein synthesis but also for the initiation of all mRNA translation through initiator tRNA(fMet) aminoacylation. In Psychrobacter cryohalolentis (strain ATCC BAA-1226 / DSM 17306 / VKM B-2378 / K5), this protein is Methionine--tRNA ligase.